Reading from the N-terminus, the 819-residue chain is Myosin light chain kinase 3 (819 aa).

Disordered regions lie at residues 146–256 (VPWR…TPSE), 273–334 (VVSP…TPPR), and 347–462 (EMLM…EQDC). Ser152 is modified (phosphoserine). Composition is skewed to basic and acidic residues over residues 158 to 170 (EENK…EGGK) and 183 to 196 (DARE…KADV). Residues 307-318 (GPGPQCPGPPGL) show a composition bias toward pro residues. Phosphoserine occurs at positions 355, 401, and 408. The Protein kinase domain occupies 515–770 (VCQHEVLGGG…ATQCLKHEWL (256 aa)). ATP is bound by residues 521 to 529 (LGGGRFGQV) and Lys544. Catalysis depends on Asp636, which acts as the Proton acceptor.

The protein belongs to the protein kinase superfamily. CAMK Ser/Thr protein kinase family. Requires Mg(2+) as cofactor. In terms of processing, phosphorylated on serine residues. As to expression, restricted to heart.

Its subcellular location is the cytoplasm. It catalyses the reaction L-seryl-[myosin light chain] + ATP = O-phospho-L-seryl-[myosin light chain] + ADP + H(+). The catalysed reaction is L-threonyl-[myosin light chain] + ATP = O-phospho-L-threonyl-[myosin light chain] + ADP + H(+). Kinase that phosphorylates MYL2 in vitro. Promotes sarcomere formation in cardiomyocytes and increases cardiomyocyte contractility. This Homo sapiens (Human) protein is Myosin light chain kinase 3 (MYLK3).